We begin with the raw amino-acid sequence, 368 residues long: MMTMWCLTLFVLWMLRVVGMHVLRYGYTGIFDDTSHMTLTVVGIFDGQHFFTYHVNSSDKASSRANGTISWMANVSAAYPTYLDGERAKGDLIFNQTEQNLLELEIALGYRSQSVLTWTHECNTTENGSFVAGYEGFGWDGETLMELKDNLTLWTGPNYEISWLKQNKTYIDGKIKNISEGDTTIQRNYLKGNCTQWSVIYSGFQTPVTHPVVKGGVRNQNDNRAEAFCTSYGFFPGEINITFIHYGNKAPDDSEPQCNPLLPTFDGTFHQGCYVAIFCNQNYTCRVTHGNWTVEIPISVTSPDDSSSGEVPDHPTANKRYNTMTISSVLLALLLCALLFAFLHYFTTLKQYLRNLAFAWRYRKVRSS.

The N-terminal stretch at 1–19 is a signal peptide; sequence MMTMWCLTLFVLWMLRVVG. The chain crosses the membrane as a helical span at residues 326 to 346; sequence ISSVLLALLLCALLFAFLHYF.

As to quaternary structure, interacts with host LILRB1.

The protein localises to the host membrane. Plays a role in the protection against host NK cell cytotoxicity by interacting with and modulating the activity of the host inhibitory leukocyte Ig-like receptor 1/LILRB1, which is expressed on monocytes, dendritic cells, as well as subsets of T and NK cells. UL18 exerts an inhibitory effect on LIR-1+ NK cells, while it stimulates LIR-1- NK cell. This chain is Membrane glycoprotein UL18 (UL18), found in Homo sapiens (Human).